The following is a 262-amino-acid chain: Phosphatidylserine decarboxylase proenzyme (262 aa).

Active-site charge relay system; for autoendoproteolytic cleavage activity residues include Asp-86, His-142, and Ser-226. The active-site Schiff-base intermediate with substrate; via pyruvic acid; for decarboxylase activity is the Ser-226. At Ser-226 the chain carries Pyruvic acid (Ser); by autocatalysis.

It belongs to the phosphatidylserine decarboxylase family. PSD-B subfamily. Prokaryotic type I sub-subfamily. As to quaternary structure, heterodimer of a large membrane-associated beta subunit and a small pyruvoyl-containing alpha subunit. Requires pyruvate as cofactor. Is synthesized initially as an inactive proenzyme. Formation of the active enzyme involves a self-maturation process in which the active site pyruvoyl group is generated from an internal serine residue via an autocatalytic post-translational modification. Two non-identical subunits are generated from the proenzyme in this reaction, and the pyruvate is formed at the N-terminus of the alpha chain, which is derived from the carboxyl end of the proenzyme. The autoendoproteolytic cleavage occurs by a canonical serine protease mechanism, in which the side chain hydroxyl group of the serine supplies its oxygen atom to form the C-terminus of the beta chain, while the remainder of the serine residue undergoes an oxidative deamination to produce ammonia and the pyruvoyl prosthetic group on the alpha chain. During this reaction, the Ser that is part of the protease active site of the proenzyme becomes the pyruvoyl prosthetic group, which constitutes an essential element of the active site of the mature decarboxylase.

The protein resides in the cell membrane. It catalyses the reaction a 1,2-diacyl-sn-glycero-3-phospho-L-serine + H(+) = a 1,2-diacyl-sn-glycero-3-phosphoethanolamine + CO2. The protein operates within phospholipid metabolism; phosphatidylethanolamine biosynthesis; phosphatidylethanolamine from CDP-diacylglycerol: step 2/2. In terms of biological role, catalyzes the formation of phosphatidylethanolamine (PtdEtn) from phosphatidylserine (PtdSer). The chain is Phosphatidylserine decarboxylase proenzyme from Bacillus mycoides (strain KBAB4) (Bacillus weihenstephanensis).